Here is a 212-residue protein sequence, read N- to C-terminus: WAP four-disulfide core domain protein 1 (212 aa).

An N-terminal signal peptide occupies residues 1–26; it reads MGSCDRKALWALSFLLLLLGSSSVQG. The segment at 43–62 is disordered; the sequence is EEVAATGSRQPHADRCPPPP. Residues 51-100 enclose the WAP domain; it reads RQPHADRCPPPPRTLPPGACQATRCQSDSECPRHRRCCYNGCAYACLEAV. 4 disulfides stabilise this stretch: Cys58–Cys88, Cys70–Cys92, Cys75–Cys87, and Cys81–Cys96. The segment at 191 to 212 is disordered; that stretch reads EYPEGDSKYVAEPGKGQQRHFP.

In terms of tissue distribution, vascular smooth muscle and prostate. Periacinar ring.

The protein resides in the secreted. Its function is as follows. Has growth inhibitory activity. This Rattus norvegicus (Rat) protein is WAP four-disulfide core domain protein 1 (Wfdc1).